A 1595-amino-acid chain; its full sequence is DNA-directed RNA polymerase subunit beta'' (1595 aa).

Cys216, Cys286, Cys294, and Cys297 together coordinate Zn(2+).

The protein belongs to the RNA polymerase beta' chain family. RpoC2 subfamily. In plastids the minimal PEP RNA polymerase catalytic core is composed of four subunits: alpha, beta, beta', and beta''. When a (nuclear-encoded) sigma factor is associated with the core the holoenzyme is formed, which can initiate transcription. Zn(2+) serves as cofactor.

The protein resides in the plastid. Its subcellular location is the chloroplast. The enzyme catalyses RNA(n) + a ribonucleoside 5'-triphosphate = RNA(n+1) + diphosphate. In terms of biological role, DNA-dependent RNA polymerase catalyzes the transcription of DNA into RNA using the four ribonucleoside triphosphates as substrates. This is DNA-directed RNA polymerase subunit beta'' from Bigelowiella natans (Pedinomonas minutissima).